The sequence spans 81 residues: Photosystem I iron-sulfur center (81 aa).

2 consecutive 4Fe-4S ferredoxin-type domains span residues 2-31 (SHSVKIYDTCIGCTQCVRACPLDVLEMVPW) and 37-68 (GQIASSPRTEDCIGCKRCETACPTDFLSVRVY). 8 residues coordinate [4Fe-4S] cluster: Cys-11, Cys-14, Cys-17, Cys-21, Cys-48, Cys-51, Cys-54, and Cys-58.

In terms of assembly, the cyanobacterial PSI reaction center is composed of one copy each of PsaA,B,C,D,E,F,I,J,K,L,M and X, and forms trimeric complexes. [4Fe-4S] cluster serves as cofactor.

It localises to the cellular thylakoid membrane. The catalysed reaction is reduced [plastocyanin] + hnu + oxidized [2Fe-2S]-[ferredoxin] = oxidized [plastocyanin] + reduced [2Fe-2S]-[ferredoxin]. Its function is as follows. Apoprotein for the two 4Fe-4S centers FA and FB of photosystem I (PSI); essential for photochemical activity. FB is the terminal electron acceptor of PSI, donating electrons to ferredoxin. The C-terminus interacts with PsaA/B/D and helps assemble the protein into the PSI complex. Required for binding of PsaD and PsaE to PSI. PSI is a plastocyanin/cytochrome c6-ferredoxin oxidoreductase, converting photonic excitation into a charge separation, which transfers an electron from the donor P700 chlorophyll pair to the spectroscopically characterized acceptors A0, A1, FX, FA and FB in turn. In Trichodesmium erythraeum (strain IMS101), this protein is Photosystem I iron-sulfur center.